A 158-amino-acid chain; its full sequence is Non-secretory ribonuclease (158 aa).

A signal peptide spans 1–27 (MVPKLFTSQICLLLLLGLLGVEGSLHA). Residue histidine 42 is the Proton acceptor of the active site. 4 cysteine pairs are disulfide-bonded: cysteine 50-cysteine 110, cysteine 64-cysteine 121, cysteine 82-cysteine 136, and cysteine 89-cysteine 98. Position 60 is a 3'-nitrotyrosine (tyrosine 60). 65 to 69 (KNQNT) contacts substrate. Asparagine 86, asparagine 92, and asparagine 111 each carry an N-linked (GlcNAc...) asparagine glycan. The active-site Proton donor is the histidine 153.

It belongs to the pancreatic ribonuclease family. In terms of assembly, interacts with and forms a tight 1:1 complex with RNH1. Dimerization of two such complexes may occur.

Its subcellular location is the lysosome. The protein resides in the cytoplasmic granule. The catalysed reaction is an [RNA] containing cytidine + H2O = an [RNA]-3'-cytidine-3'-phosphate + a 5'-hydroxy-ribonucleotide-3'-[RNA].. It carries out the reaction an [RNA] containing uridine + H2O = an [RNA]-3'-uridine-3'-phosphate + a 5'-hydroxy-ribonucleotide-3'-[RNA].. This is a non-secretory ribonuclease. It is a pyrimidine specific nuclease with a slight preference for U. Cytotoxin and helminthotoxin. Possesses a wide variety of biological activities. The protein is Non-secretory ribonuclease (RNASE2) of Aotus trivirgatus (Three-striped night monkey).